We begin with the raw amino-acid sequence, 276 residues long: uncharacterized protein (276 aa).

The signal sequence occupies residues 1-29; the sequence is MKSHVRSFKTYIRDEIIKKGGWVNAHAHA.

The protein belongs to the metallo-dependent hydrolases superfamily.

This is an uncharacterized protein from Haemophilus influenzae (strain ATCC 51907 / DSM 11121 / KW20 / Rd).